The sequence spans 119 residues: Holo-[acyl-carrier-protein] synthase (119 aa).

Asp-8 and Glu-58 together coordinate Mg(2+).

It belongs to the P-Pant transferase superfamily. AcpS family. The cofactor is Mg(2+).

The protein resides in the cytoplasm. The catalysed reaction is apo-[ACP] + CoA = holo-[ACP] + adenosine 3',5'-bisphosphate + H(+). Transfers the 4'-phosphopantetheine moiety from coenzyme A to a Ser of acyl-carrier-protein. The sequence is that of Holo-[acyl-carrier-protein] synthase from Bacillus cereus (strain B4264).